Here is a 139-residue protein sequence, read N- to C-terminus: Arsenate reductase (139 aa).

Active-site nucleophile residues include Cys-10, Cys-82, and Cys-89. 2 cysteine pairs are disulfide-bonded: Cys-10/Cys-82 and Cys-82/Cys-89.

This sequence belongs to the low molecular weight phosphotyrosine protein phosphatase family. Thioredoxin-coupled ArsC subfamily. Monomer.

It localises to the cytoplasm. It catalyses the reaction arsenate + [thioredoxin]-dithiol + H(+) = arsenite + [thioredoxin]-disulfide + H2O. With respect to regulation, activity is potassium and sulfate-independent. Its function is as follows. Catalyzes the reduction of arsenate [As(V)] to arsenite [As(III)]. In vitro, can dephosphorylate para-nitrophenyl phosphate (pNPP). This Bacillus subtilis (strain 168) protein is Arsenate reductase.